The primary structure comprises 289 residues: Heme oxygenase 1, chloroplastic (289 aa).

The transit peptide at 1-64 (MAPAAASLTA…SASSSRRMVV (64 aa)) directs the protein to the chloroplast. H96 contributes to the heme b binding site.

The protein belongs to the heme oxygenase family.

The protein localises to the plastid. It is found in the chloroplast. The enzyme catalyses heme b + 3 reduced [NADPH--hemoprotein reductase] + 3 O2 = biliverdin IXalpha + CO + Fe(2+) + 3 oxidized [NADPH--hemoprotein reductase] + 3 H2O + H(+). Catalyzes the opening of the heme ring to form the open-chain tetrapyrrole biliverdin IX with the release of iron and carbon monoxide (CO). Is a key enzyme in the synthesis of the chromophore of the phytochrome family of plant photoreceptors. Essential for photoperiod response and repression of flowering through cytochromes that inhibit flowering by affecting both HD1 and EHD1 flowering pathways. This Oryza sativa subsp. japonica (Rice) protein is Heme oxygenase 1, chloroplastic (HO1).